Consider the following 642-residue polypeptide: Threonine--tRNA ligase (642 aa).

The region spanning 1–61 (MPVVTLPDGS…DSDANLAIIT (61 aa)) is the TGS domain. Positions 243 to 534 (DHRKIGKQLD…LTEEYAGFFP (292 aa)) are catalytic. Zn(2+)-binding residues include Cys-334, His-385, and His-511.

Belongs to the class-II aminoacyl-tRNA synthetase family. Homodimer. The cofactor is Zn(2+).

Its subcellular location is the cytoplasm. The enzyme catalyses tRNA(Thr) + L-threonine + ATP = L-threonyl-tRNA(Thr) + AMP + diphosphate + H(+). Catalyzes the attachment of threonine to tRNA(Thr) in a two-step reaction: L-threonine is first activated by ATP to form Thr-AMP and then transferred to the acceptor end of tRNA(Thr). Also edits incorrectly charged L-seryl-tRNA(Thr). The protein is Threonine--tRNA ligase of Photorhabdus laumondii subsp. laumondii (strain DSM 15139 / CIP 105565 / TT01) (Photorhabdus luminescens subsp. laumondii).